A 306-amino-acid polypeptide reads, in one-letter code: D-alanine--D-alanine ligase (306 aa).

The ATP-grasp domain maps to 101–300; that stretch reads KVVMAAAGIP…FGELVTWMVE (200 aa). 128-182 is a binding site for ATP; it reads LPPPYVLKPNTGGSSVGVFIVKEDQPHPPQELFRADWTFGESLMAEPFIKGLELT. 3 residues coordinate Mg(2+): Asp250, Glu267, and Asn269.

The protein belongs to the D-alanine--D-alanine ligase family. Requires Mg(2+) as cofactor. Mn(2+) serves as cofactor.

The protein localises to the cytoplasm. It carries out the reaction 2 D-alanine + ATP = D-alanyl-D-alanine + ADP + phosphate + H(+). It participates in cell wall biogenesis; peptidoglycan biosynthesis. Functionally, cell wall formation. This Azorhizobium caulinodans (strain ATCC 43989 / DSM 5975 / JCM 20966 / LMG 6465 / NBRC 14845 / NCIMB 13405 / ORS 571) protein is D-alanine--D-alanine ligase.